We begin with the raw amino-acid sequence, 1940 residues long: Myosin-3 (1940 aa).

The region spanning 33–82 (DAKTYCFVVDSKEEYVKGKIKSSQDGKVTVETEDSRTLVVKPEDVYAMNP) is the Myosin N-terminal SH3-like domain. The region spanning 86 to 779 (DKIEDMAMLT…LLGTLEEMRD (694 aa)) is the Myosin motor domain. K130 bears the N6,N6,N6-trimethyllysine mark. 179-186 (GESGAGKT) lines the ATP pocket. Actin-binding regions lie at residues 656–678 (LNKL…IPNE) and 758–772 (KFGH…GLLG). The region spanning 782 to 811 (LAKLITRTQAVCRGFLMRVEFQKMMQRRES) is the IQ domain. Residues 841–1928 (LKSAETEKEM…NKLRAKTRDF (1088 aa)) are a coiled coil. Positions 1260 to 1289 (ARGKNEEMQRSLSELTTQKSRLQTEAGELS) are disordered. Polar residues predominate over residues 1269 to 1282 (RSLSELTTQKSRLQ).

This sequence belongs to the TRAFAC class myosin-kinesin ATPase superfamily. Myosin family. Muscle myosin is a hexameric protein that consists of 2 heavy chain subunits (MHC), 2 alkali light chain subunits (MLC) and 2 regulatory light chain subunits (MLC-2).

It is found in the cytoplasm. The protein resides in the myofibril. Its function is as follows. Muscle contraction. The protein is Myosin-3 (Myh3) of Mus musculus (Mouse).